Here is a 113-residue protein sequence, read N- to C-terminus: MHELSLCQSAVEIIQQQAEQHGVARVTGVWLEIGALSCVEERAVRFSFDIACQGTLAQGCELHIDYRPAQAWCWDCSQVVEILRHDAQCPHCHGDRLRVDTGDSLKVKSIEVE.

Ni(2+)-binding residues include histidine 2 and glutamate 3. Positions 73, 76, 89, and 92 each coordinate Zn(2+).

The protein belongs to the HypA/HybF family. HybF subfamily.

Its function is as follows. Involved in the maturation of [NiFe] hydrogenases. Required for nickel insertion into the metal center of the hydrogenase. The chain is Hydrogenase maturation factor HybF from Salmonella typhi.